Reading from the N-terminus, the 165-residue chain is LIM domain transcription factor LMO4.2 (165 aa).

2 consecutive LIM zinc-binding domains span residues 21–83 (KRCA…LFGN) and 85–147 (GACS…ALIN).

Functionally, acts as a positive cofactor of GATA transcription factors to establish the identity of the ventral mesoderm during gastrulation. Down-regulation in the dorsal mesoderm is necessary for the proper formation of this territory since, when present, lmo4 may bind ldb1 and restrict the availability of this cofactor for Spemman organizer transcription factors. At neurula stages, suppresses primary neuron differentiation and modulates gene expression at the Isthmic Organizer of the midbrain-hindbrain boundary. The protein is LIM domain transcription factor LMO4.2 (lmo4.2) of Xenopus tropicalis (Western clawed frog).